The primary structure comprises 139 residues: uncharacterized protein (139 aa).

The segment at 54–75 (NSLHRHGDQAWGKHRRQNSLKS) is disordered.

This is an uncharacterized protein from Homo sapiens (Human).